The sequence spans 855 residues: Axonemal dynein light chain domain-containing protein 1 (855 aa).

Over residues 1–17 (MSLPKTPSTPLNSASTS) the composition is skewed to polar residues. A disordered region spans residues 1-31 (MSLPKTPSTPLNSASTSESKKLVSVATEGTR). Coiled coils occupy residues 316 to 402 (QRIL…WSSA), 451 to 480 (LQKLTQKWRNLVNKFKQEVEEMEESTRETL), and 571 to 596 (SERQYMEEIIKNIQKLYKEYEIRING).

It localises to the cytoplasm. Functionally, may be essential for spermiogenesis and male fertility probably by regulating the manchette dynamics, spermatid head shaping and sperm flagellum assembly. The protein is Axonemal dynein light chain domain-containing protein 1 (AXDND1) of Macaca fascicularis (Crab-eating macaque).